The sequence spans 77 residues: Large ribosomal subunit protein bL28 (77 aa).

The interval 1 to 26 is disordered; the sequence is MARVCKVTGKRPMSGNNVSHANNKTK.

It belongs to the bacterial ribosomal protein bL28 family.

The protein is Large ribosomal subunit protein bL28 of Neisseria gonorrhoeae (strain ATCC 700825 / FA 1090).